A 173-amino-acid chain; its full sequence is Large ribosomal subunit protein uL10 (173 aa).

It belongs to the universal ribosomal protein uL10 family. Part of the ribosomal stalk of the 50S ribosomal subunit. The N-terminus interacts with L11 and the large rRNA to form the base of the stalk. The C-terminus forms an elongated spine to which L12 dimers bind in a sequential fashion forming a multimeric L10(L12)X complex.

Functionally, forms part of the ribosomal stalk, playing a central role in the interaction of the ribosome with GTP-bound translation factors. This is Large ribosomal subunit protein uL10 from Chlorobium phaeobacteroides (strain BS1).